Here is a 1975-residue protein sequence, read N- to C-terminus: Golgi-specific brefeldin A-resistance guanine nucleotide exchange factor 1 homolog (1975 aa).

Disordered regions lie at residues 216-243 (NPTEKRQKRKKKRQLSVHIETKAKEPEN) and 299-352 (ISAG…EEKM). Basic residues predominate over residues 221 to 230 (RQKRKKKRQL). One can recognise an SEC7 domain in the interval 624–812 (QIIEQKKRKR…ADMYQAIKTE (189 aa)). Residues 1264 to 1277 (QSLRVGGDQQQQRM) show a composition bias toward polar residues. Disordered regions lie at residues 1264–1318 (QSLR…DLES), 1447–1473 (DEKAVKKHHHHHHGHKKKELCTDVTED), 1699–1751 (IKDT…ATAQ), 1788–1854 (VHSG…QYAY), and 1877–1975 (YANQ…QEKP). The span at 1291–1309 (GAHEERAYTSEGEERRRGG) shows a compositional bias: basic and acidic residues. Residues 1451-1464 (VKKHHHHHHGHKKK) show a composition bias toward basic residues. Positions 1734 to 1751 (SNSTAATSTSDPSIATAQ) are enriched in low complexity. Over residues 1797–1808 (GSPPQTEPPASS) the composition is skewed to pro residues. Low complexity-rich tracts occupy residues 1820 to 1854 (YEQYRQQQAAAAQQYQQYNQNYPQQQQQQQQQYAY) and 1877 to 1894 (YANQYQHYQQQQQQQQQH). A compositionally biased stretch (polar residues) spans 1895-1909 (PVNPTSPSVHGQYSV). The span at 1938–1957 (TPPQNNAPALAPSAPTTTSA) shows a compositional bias: low complexity.

The protein resides in the golgi apparatus. It localises to the cis-Golgi network. The protein localises to the endoplasmic reticulum-Golgi intermediate compartment. Its function is as follows. Guanine-nucleotide exchange factor (GEF) for members of the Arf family of small GTPases involved in trafficking in the early secretory pathway; its GEF activity initiates the coating of nascent vesicles via the localized generation of activated ARFs through replacement of GDP with GTP. Also, plays a role in receptor-mediated endocytosis in oocytes and endosomal trafficking. Involved in vesicle retrograde transport from the ERGIC and cis-Golgi compartments to the endoplasmic reticulum (ER). Plays a role in maintaining mitochondrial morphology, network organization and function. May be required for the basolateral cell membrane localization of the serine threonine protein kinase sgk-1 in intestinal cells. This Caenorhabditis elegans protein is Golgi-specific brefeldin A-resistance guanine nucleotide exchange factor 1 homolog.